We begin with the raw amino-acid sequence, 563 residues long: Quinidine resistance protein 1 (563 aa).

Over residues 1-10 the composition is skewed to polar residues; that stretch reads MTKQQTSVMR. The interval 1 to 50 is disordered; sequence MTKQQTSVMRNASIAKEEREGSDNNNVDRSSSDAISDNDAERSNSHSEID. At 1–75 the chain is on the cytoplasmic side; sequence MTKQQTSVMR…KQKMLLVVQC (75 aa). The span at 23-33 shows a compositional bias: low complexity; sequence DNNNVDRSSSD. Residues 39–49 are compositionally biased toward basic and acidic residues; it reads DAERSNSHSEI. The chain crosses the membrane as a helical span at residues 76–96; it reads AFTGFFSTVAGSIYYPVLTII. Residues 97 to 108 are Extracellular-facing; sequence ERKFNITEELAN. A helical membrane pass occupies residues 109 to 129; sequence VTIVVYFIFQGVAPSIMGGLA. At 130–135 the chain is on the cytoplasmic side; it reads DTFGRR. A helical membrane pass occupies residues 136 to 156; sequence PIVLWAILAYFCACIGLACAH. The Extracellular segment spans residues 157–165; the sequence is NYAQILALR. Residues 166-186 form a helical membrane-spanning segment; the sequence is CLQAAGISPVIAINSGIMGDV. The Cytoplasmic portion of the chain corresponds to 187-195; the sequence is TTKVERGGY. Residues 196-216 form a helical membrane-spanning segment; that stretch reads VGLVAGFQVVGTAFGALIGAG. Residues 217–224 lie on the Extracellular side of the membrane; the sequence is LSSKWGWR. A helical membrane pass occupies residues 225-245; the sequence is AIFWFLAIGSGICLVFSTLLM. At 246–296 the chain is on the cytoplasmic side; sequence PETKRTLVGNGSVTPRSFLNRSLILHVGSVKKTLHLDDPDPETLEPRTSVD. A helical transmembrane segment spans residues 297–317; it reads FLAPLKILHIREIDILLSIAG. The Extracellular portion of the chain corresponds to 318-341; that stretch reads LQFSTWTTHQTALTIVLSKKYNLS. Residues 342–362 traverse the membrane as a helical segment; it reads VAKIGLCFLPAGISTLTSIIS. At 363–421 the chain is on the cytoplasmic side; that stretch reads AGRYLNWSYRTRKVKYNRWIKEQELQLMEKYKGDKNKVAELIHSNSHYAFNLVEARLHP. Residues 422-442 form a helical membrane-spanning segment; the sequence is AFVTLLLSSIGFTAFGWCISV. The Extracellular portion of the chain corresponds to 443 to 445; sequence KTP. A helical membrane pass occupies residues 446-466; sequence LAAVLCTSAFASLFSNCILTF. Residues 467 to 481 lie on the Cytoplasmic side of the membrane; that stretch reads STTLIVDLFPSKAST. Residues 482-502 traverse the membrane as a helical segment; sequence ATGCLNLFRCLLSAIFIAALT. Residues 503 to 511 are Extracellular-facing; it reads KMVEKMRYG. Residues 512 to 532 form a helical membrane-spanning segment; sequence GVFTFLSAITSSSSLLLFYLL. The Cytoplasmic portion of the chain corresponds to 533-563; that stretch reads KNGKQLSFDRIRANDKSAGRSVGKNSEKVST.

This sequence belongs to the major facilitator superfamily. CAR1 family.

The protein localises to the cell membrane. Functionally, multidrug resistance transporter involved in resistance and adaptation to quinidine and ketoconazole. This is Quinidine resistance protein 1 (QDR1) from Saccharomyces cerevisiae (strain ATCC 204508 / S288c) (Baker's yeast).